A 222-amino-acid chain; its full sequence is Eukaryotic translation initiation factor 3 subunit K (222 aa).

Residues Tyr-46 to Lys-208 form the PCI domain.

The protein belongs to the eIF-3 subunit K family. As to quaternary structure, component of the eukaryotic translation initiation factor 3 (eIF-3) complex. The eIF-3 complex interacts with pix.

The protein localises to the cytoplasm. Component of the eukaryotic translation initiation factor 3 (eIF-3) complex, which is involved in protein synthesis of a specialized repertoire of mRNAs and, together with other initiation factors, stimulates binding of mRNA and methionyl-tRNAi to the 40S ribosome. The eIF-3 complex specifically targets and initiates translation of a subset of mRNAs involved in cell proliferation. The polypeptide is Eukaryotic translation initiation factor 3 subunit K (Drosophila sechellia (Fruit fly)).